The chain runs to 545 residues: Probable bifunctional tRNA threonylcarbamoyladenosine biosynthesis protein (545 aa).

The tract at residues 1-329 (MDTSKDLICI…YRSDMVEVNW (329 aa)) is kae1. Fe cation contacts are provided by His-112, His-116, and Tyr-133. L-threonylcarbamoyladenylate is bound by residues 133 to 137 (YVSGG), Asp-165, Gly-178, Glu-182, and Asn-262. Asp-290 contacts Fe cation. The Protein kinase domain occupies 344–545 (IIPEHLIGKG…KEVEKRARYL (202 aa)). ATP is bound by residues 350–358 (IGKGAEADI) and Lys-371. Asp-463 acts as the Proton acceptor; for kinase activity in catalysis.

In the N-terminal section; belongs to the KAE1 / TsaD family. The protein in the C-terminal section; belongs to the protein kinase superfamily. Tyr protein kinase family. BUD32 subfamily. In terms of assembly, component of the KEOPS complex that consists of Kae1, Bud32, Cgi121 and Pcc1; the whole complex dimerizes. It depends on Fe(2+) as a cofactor.

The protein localises to the cytoplasm. The catalysed reaction is L-seryl-[protein] + ATP = O-phospho-L-seryl-[protein] + ADP + H(+). It carries out the reaction L-threonyl-[protein] + ATP = O-phospho-L-threonyl-[protein] + ADP + H(+). It catalyses the reaction L-threonylcarbamoyladenylate + adenosine(37) in tRNA = N(6)-L-threonylcarbamoyladenosine(37) in tRNA + AMP + H(+). Its function is as follows. Required for the formation of a threonylcarbamoyl group on adenosine at position 37 (t(6)A37) in tRNAs that read codons beginning with adenine. Is a component of the KEOPS complex that is probably involved in the transfer of the threonylcarbamoyl moiety of threonylcarbamoyl-AMP (TC-AMP) to the N6 group of A37. The Kae1 domain likely plays a direct catalytic role in this reaction. The Bud32 domain probably displays kinase activity that regulates Kae1 function. This is Probable bifunctional tRNA threonylcarbamoyladenosine biosynthesis protein from Methanococcus maripaludis (strain C5 / ATCC BAA-1333).